Consider the following 229-residue polypeptide: Protein-L-isoaspartate O-methyltransferase (229 aa).

S78 is a catalytic residue.

The protein belongs to the methyltransferase superfamily. L-isoaspartyl/D-aspartyl protein methyltransferase family.

The protein resides in the cytoplasm. The enzyme catalyses [protein]-L-isoaspartate + S-adenosyl-L-methionine = [protein]-L-isoaspartate alpha-methyl ester + S-adenosyl-L-homocysteine. In terms of biological role, catalyzes the methyl esterification of L-isoaspartyl residues in peptides and proteins that result from spontaneous decomposition of normal L-aspartyl and L-asparaginyl residues. It plays a role in the repair and/or degradation of damaged proteins. This is Protein-L-isoaspartate O-methyltransferase from Chromohalobacter salexigens (strain ATCC BAA-138 / DSM 3043 / CIP 106854 / NCIMB 13768 / 1H11).